Reading from the N-terminus, the 562-residue chain is Actin-related protein 8 (562 aa).

248-251 (DVGD) is a binding site for ATP.

Belongs to the actin family. ARP8 subfamily. Component of the chromatin remodeling Ino80 complex. Exists as monomers and dimers, but the dimer is most probably the biologically relevant form required for stable interactions with histones that exploits the twofold symmetry of the nucleosome core.

Its subcellular location is the nucleus. Its function is as follows. Plays an important role in the functional organization of mitotic chromosomes. Exhibits low basal ATPase activity, and unable to polymerize. In terms of biological role, proposed core component of the chromatin remodeling INO80 complex which is involved in transcriptional regulation, DNA replication and probably DNA repair. Strongly prefer nucleosomes and H3-H4 tetramers over H2A-H2B dimers, suggesting it may act as a nucleosome recognition module within the complex. The chain is Actin-related protein 8 from Aedes aegypti (Yellowfever mosquito).